Here is a 475-residue protein sequence, read N- to C-terminus: MLPTYVRLFTAVCALATTASAVVPIEVKGKDFVNSKTGDRFQILGVDYQPGGSSGFTKDKDPLSDPDACLRDAALMQRLGVNTIRIYNLSPSLNHDECASIFNAAGIYMILDVNSPLYGGYLDRTDPESTYNDVYFKQVFGVIEAFKNFPNTLAFFAGNEVINEQSVKNVPTYVRAIQRDMKDYIAKNLDRSIPVGYSAADIRPILMDTLNYFMCADDANSQSDFFGLNSYSWCGNSSYTKSGYDVLTKDFADASIPVFFSEYGCNEVQPRYFSEVQALYGQEMTQSFSGGLVYEYTQEENDYGLVQINDNGTVTLLVDYDNLMAQYSKLDMSRIQASNTTQTSAKPPKCESSLITNSTFTDSFDLPKRPSKVQTMIDKGLSDANTGKLVEVKNTDIKQKIYNANGEEITGIKLSILASGESNTPGAHSSGSTSGSSSSGGSSSSSSDKESAAGTISVPFVGLLSAASFMAFFML.

Residues M1–A21 form the signal peptide. A disulfide bridge connects residues C69 and C98. Y87, N159, E160, and D201 together coordinate (1,3-beta-D-glucosyl)n. E160 acts as the Proton donor in catalysis. 2 disulfide bridges follow: C215/C350 and C234/C265. N-linked (GlcNAc...) asparagine glycosylation is present at N236. E262 serves as the catalytic Nucleophile. Y294 is a binding site for (1,3-beta-D-glucosyl)n. Residues N311, N339, and N357 are each glycosylated (N-linked (GlcNAc...) asparagine). The interval G420 to S451 is disordered. A compositionally biased stretch (low complexity) spans S429–S446. S451 carries GPI-like-anchor amidated serine lipidation. Residues A452–L475 constitute a propeptide, removed in mature form.

The protein belongs to the glycosyl hydrolase 72 family. In terms of processing, the GPI-like anchor contains a phosphoceramide lipid group.

It localises to the cell membrane. In terms of biological role, splits internally a 1,3-beta-glucan molecule and transfers the newly generated reducing end (the donor) to the non-reducing end of another 1,3-beta-glucan molecule (the acceptor) forming a 1,3-beta linkage, resulting in the elongation of 1,3-beta-glucan chains in the cell wall. Involved in cell wall morphogenesis. This chain is 1,3-beta-glucanosyltransferase gel2 (gel2), found in Aspergillus fumigatus (strain CBS 144.89 / FGSC A1163 / CEA10) (Neosartorya fumigata).